A 276-amino-acid polypeptide reads, in one-letter code: Putative ripening-related protein 5 (276 aa).

An N-terminal signal peptide occupies residues 1–18; the sequence is MAMIFLLAALSTTHLASS.

It belongs to the kiwellin family.

It is found in the secreted. This chain is Putative ripening-related protein 5, found in Oryza sativa subsp. japonica (Rice).